Reading from the N-terminus, the 110-residue chain is Insulin (110 aa).

Residues 1-24 (MALWMRLLPLLALLALWGPDPAQA) form the signal peptide. 3 cysteine pairs are disulfide-bonded: Cys31–Cys96, Cys43–Cys109, and Cys95–Cys100. A propeptide spans 57-87 (EAEDLQVGQVELGGGPGAGSLQPLALEGSLQ) (c peptide).

This sequence belongs to the insulin family. As to quaternary structure, heterodimer of a B chain and an A chain linked by two disulfide bonds.

The protein localises to the secreted. In terms of biological role, insulin decreases blood glucose concentration. It increases cell permeability to monosaccharides, amino acids and fatty acids. It accelerates glycolysis, the pentose phosphate cycle, and glycogen synthesis in liver. This chain is Insulin (INS), found in Pongo pygmaeus (Bornean orangutan).